The primary structure comprises 264 residues: MAGEQKPSSNLLEQFILLAKGTSGSALTALISQVLEAPGVYVFGELLELANVQELAEGANAAYLQLLNLFAYGTYPDYIANKESLPELSTAQQNKLKHLTIVSLASRMKCIPYSVLLKDLEMRNLRELEDLIIEAVYTDIIQGKLDQRNQLLEVDFCIGRDIRKKDINNIVKTLHEWCDGCEAVLLGIEQQVLRANQYKENHSRTQQQVEAEVTNIKKTLKATASSSAQEMEQQLAERECPPHAEQRQPTKKMSKVKGLVSSRH.

N-acetylalanine is present on alanine 2. In terms of domain architecture, PCI spans 2–159 (AGEQKPSSNL…QLLEVDFCIG (158 aa)). A coiled-coil region spans residues 194 to 237 (RANQYKENHSRTQQQVEAEVTNIKKTLKATASSSAQEMEQQLAE). A compositionally biased stretch (polar residues) spans 223–232 (TASSSAQEME). Residues 223 to 264 (TASSSAQEMEQQLAERECPPHAEQRQPTKKMSKVKGLVSSRH) are disordered. Positions 235 to 248 (LAERECPPHAEQRQ) are enriched in basic and acidic residues.

Belongs to the CSN7/EIF3M family. CSN7 subfamily. As to quaternary structure, component of the CSN complex, composed of COPS1/GPS1, COPS2, COPS3, COPS4, COPS5, COPS6, COPS7 (COPS7A or COPS7B), COPS8 and COPS9. In the complex, it probably interacts directly with COPS1, COPS2, COPS4, COPS5, COPS6 and COPS8. Interacts with EIF3S6.

It is found in the cytoplasm. Its subcellular location is the nucleus. Component of the COP9 signalosome complex (CSN), a complex involved in various cellular and developmental processes. The CSN complex is an essential regulator of the ubiquitin (Ubl) conjugation pathway by mediating the deneddylation of the cullin subunits of SCF-type E3 ligase complexes, leading to decrease the Ubl ligase activity of SCF-type complexes such as SCF, CSA or DDB2. The complex is also involved in phosphorylation of p53/TP53, JUN, I-kappa-B-alpha/NFKBIA, ITPK1 and IRF8/ICSBP, possibly via its association with CK2 and PKD kinases. CSN-dependent phosphorylation of TP53 and JUN promotes and protects degradation by the Ubl system, respectively. The sequence is that of COP9 signalosome complex subunit 7b (COPS7B) from Bos taurus (Bovine).